The following is a 1108-amino-acid chain: MTNTKYYPEVSSNADFATIEKEILKFWQDNNIFQKSIDIREGDAEFIFYDGPPFANGLPHYGHLLTGFIKDVYARYQTVRGKKVERRFGWDCHGLPAEMQSEKELGISGHLAITNFGIEKFNAHCRDSVMKYAGEWEQYVTRQARWVDFKNSYKTMDKNFMESVLWAFKELYNKGLLYESMRVMPYSWACETPLSNFETRLDNSYRERADKAVTVSFVLCHPVSKSTLDVIPWLDHGIQKTINNDSANCSMDPVDKPRYDTENFLGITANYKEYRILAWTTTTWTLPSNLALAVGSDIDYALVPKGDVCYIIAASSVSKYAKELELKGDEQFTIIKGSELQGLSYKPLFDYFKNHPNSFKIFAGDFVVEGDGTGVVHMAPGFGEDDQILCESKGIKLVCPVDNSGKFTKEIPDLEGLQVFDANDKIIIKLKEQGNWLKTEQYIHNYPHCWRTDTPLIYKAVPSWYVKVTEFKDRMVELNQQINWIPTHVKDNLFGKWLENARDWSISRNRFWGTPLPVWKSDDPKYPRIDVYGSIEELEKDFGVKITDLHRPFIDELTRANPDDPTGKSTMRRIEDVFDCWFESGSMPYGQAHYPFENKQWFEEHFPADFIVEYSAQTRGWFYTLMVLSTALFDRPPFLNCICHGVILDATGQKLSKRLNNYADPLELFDKYGSDALRVTMLSSNVVKGQELLIDKDGKMVFDTLRLFIKPIWNAYHFFTMYVNADHIKGELNFTSENVLDVYILSKLKIAVEKIKESLDSFDTGTAYHAVSEFFEVLNNWYIRRSRARFWKSEKDADKQSAYNTLYTCLETMAIAMSSLVPLISEAIYLGLYCHPRKSGDPEKPECLDSRLCGNDNLSVHLCDYPDLSKFKINSELVDTMDTVLDICSHSLFIRSSENARVRQPLSSITIISKNNDKLKSFEDLIKDEINVKSVIYRDDLENYAVKKLSINFPLLGKRLPAKMKDIIAASKKNEWEVTSGSLIICNETLNSDEYKLILEPHSHIKGASSFAHNSSLLILDLELTPELIDEGIARDIVRFIQQARKNADFAITDRILIDINLPKITDIYGEFIKEQTLGEFAKDFIPDHISEIELDNHKLQLKIKKVN.

The 'HIGH' region motif lies at 53-63 (PFANGLPHYGH). The short motif at 654-658 (KLSKR) is the 'KMSKS' region element. K657 lines the ATP pocket.

Belongs to the class-I aminoacyl-tRNA synthetase family. IleS type 2 subfamily. In terms of assembly, monomer. Zn(2+) serves as cofactor.

It is found in the cytoplasm. The catalysed reaction is tRNA(Ile) + L-isoleucine + ATP = L-isoleucyl-tRNA(Ile) + AMP + diphosphate. Its function is as follows. Catalyzes the attachment of isoleucine to tRNA(Ile). As IleRS can inadvertently accommodate and process structurally similar amino acids such as valine, to avoid such errors it has two additional distinct tRNA(Ile)-dependent editing activities. One activity is designated as 'pretransfer' editing and involves the hydrolysis of activated Val-AMP. The other activity is designated 'posttransfer' editing and involves deacylation of mischarged Val-tRNA(Ile). This Rickettsia bellii (strain RML369-C) protein is Isoleucine--tRNA ligase.